Here is a 1017-residue protein sequence, read N- to C-terminus: A-type ATP synthase subunit A (1017 aa).

The region spanning 396 to 529 (FLGYLIADGT…FSYLLAKLGI (134 aa)) is the DOD-type homing endonuclease domain.

The protein belongs to the ATPase alpha/beta chains family. Has multiple subunits with at least A(3), B(3), C, D, E, F, H, I and proteolipid K(x). This protein undergoes a protein self splicing that involves a post-translational excision of the VDE intervening region (intein) followed by peptide ligation.

It is found in the cell membrane. It carries out the reaction ATP + H2O + 4 H(+)(in) = ADP + phosphate + 5 H(+)(out). Its function is as follows. Component of the A-type ATP synthase that produces ATP from ADP in the presence of a proton gradient across the membrane. The A chain is the catalytic subunit. This Pyrococcus abyssi (strain GE5 / Orsay) protein is A-type ATP synthase subunit A.